Consider the following 308-residue polypeptide: Pycsar effector protein PaPycTIR (308 aa).

Position 54-143 (54-143) interacts with a nucleoside 3',5'-cyclic phosphate; that stretch reads LITEDAEDSE…RQVTRQLVDR (90 aa). The TIR-like stretch occupies residues 160 to 278; that stretch reads VFIICSVEAL…DLKGLTTIGY (119 aa).

The protein resides in the cytoplasm. It catalyses the reaction NAD(+) + H2O = ADP-D-ribose + nicotinamide + H(+). Functionally, pycsar (pyrimidine cyclase system for antiphage resistance) provides immunity against bacteriophage. The pyrimidine cyclase (PycC) synthesizes cyclic nucleotides in response to infection; these serve as specific second messenger signals. The signals activate the adjacent effector, leading to bacterial cell death and abortive phage infection. A clade A Pycsar system. Its function is as follows. The effector gene of a two-gene Pycsar system. Expression of this and adjacent uridylate cyclase PaPycC (AC P0DV40) probably confers resistance to bacteriophage. The genes are probably only expressed in response to bacteriophage infection. Probably only responds to cUMP (produced by its cognate NTP cyclase), acts by depleting cellular NAD(+) levels. The chain is Pycsar effector protein PaPycTIR from Pseudomonas aeruginosa.